The primary structure comprises 647 residues: Auxin efflux carrier component 2 (647 aa).

Residues 1-7 (MITGKDM) lie on the Extracellular side of the membrane. Residues 8–28 (YDVLAAMVPLYVAMILAYGSV) form a helical membrane-spanning segment. Over 29–38 (RWWGIFTPDQ) the chain is Cytoplasmic. Residues 39–59 (CSGINRFVAVFAVPLLSFHFI) traverse the membrane as a helical segment. Val51 contacts (indol-3-yl)acetate. Residues 60-68 (SSNDPYAMN) are Extracellular-facing. Residues 69–89 (YHFLAADSLQKVVILAALFLW) form a helical membrane-spanning segment. At 90–100 (QAFSRRGSLEW) the chain is on the cytoplasmic side. Residues 101–121 (MITLFSLSTLPNTLVMGIPLL) form a helical membrane-spanning segment. The (indol-3-yl)acetate site is built by Asn112 and Leu114. Residues 122–131 (RAMYGDFSGN) lie on the Extracellular side of the membrane. Residues 132-152 (LMVQIVVLQSIIWYTLMLFLF) traverse the membrane as a helical segment. (indol-3-yl)acetate is bound at residue Tyr145. Over 153–507 (EFRGAKLLIS…LIRNPNTYSS (355 aa)) the chain is Cytoplasmic. Phosphoserine occurs at positions 237, 258, and 310. Positions 339 to 380 (SVPSYPPPNPMFTGSTSGASGVKKKESGGGGSGGGVGVGGQN) are disordered. Residue Thr354 is modified to Phosphothreonine. Over residues 366–378 (GGGGSGGGVGVGG) the composition is skewed to gly residues. Ser393 is modified (phosphoserine). 2 disordered regions span residues 397-420 (EANA…KVSI) and 440-481 (PGRK…QQMP). Residues 508–528 (LFGLAWSLVSFKWNIKMPTIM) form a helical membrane-spanning segment. The Extracellular segment spans residues 529–531 (SGS). The helical transmembrane segment at 532–552 (ISILSDAGLGMAMFSLGLFMA) threads the bilayer. At 553 to 568 (LQPKIIACGKSVAGFA) the chain is on the cytoplasmic side. A helical membrane pass occupies residues 569–589 (MAVRFLTGPAVIAATSIAIGI). The Extracellular portion of the chain corresponds to 590–592 (RGD). A helical membrane pass occupies residues 593–613 (LLHIAIVQAALPQGIVPFVFA). Ile607 and Val608 together coordinate (indol-3-yl)acetate. Topologically, residues 614 to 626 (KEYNVHPDILSTA) are cytoplasmic. The chain crosses the membrane as a helical span at residues 627-647 (VIFGMLVALPVTVLYYVLLGL).

This sequence belongs to the auxin efflux carrier (TC 2.A.69.1) family. In terms of assembly, homodimer. Interacts with FYPP1 and FYPP3. Component of a complex made of PINs (e.g. PIN1 and PIN2), MAB4/MELs (e.g. NPY1/MAB4 and NPY5/MEL1) and AGC kinases (e.g. D6PK and PID) at the plasma membrane. Binds directly to NPY1/MAB4, NPY5/MEL1 and PID. In terms of tissue distribution, root-specific. Localized to the cortex, epidermis and lateral root cap, predominantly at the upper side of cells.

The protein localises to the cell membrane. Acts as a component of the auxin efflux carrier. Seems to be involved in the root-specific auxin transport, and mediates the root gravitropism. Its particular localization suggests a role in the translocation of auxin towards the elongation zone. Recrutes NPY proteins (e.g. NPY1/MAB4 and NPY5/MEL1) to the plasma membrane in a polar basal localization in root epidermis; this activity is optimized by AGC kinases-mediated (e.g. D6PK and PID) phosphorylation that limits their lateral diffusion-based escape. In Arabidopsis thaliana (Mouse-ear cress), this protein is Auxin efflux carrier component 2.